A 181-amino-acid polypeptide reads, in one-letter code: SRP-independent targeting protein 2 (181 aa).

The Cytoplasmic portion of the chain corresponds to 1–15 (MAGKAGRKQASSNAK). A helical membrane pass occupies residues 16 to 36 (IIQGLYKQVSLFLGMAIVRLF). Residues 37–45 (ISRKVTIGQ) lie on the Lumenal side of the membrane. Residues 46–66 (WIKLVALNVPMFVALYIIVLS) form a helical membrane-spanning segment. Residues 67–89 (GKPKYDGNRVVKQGIDLNDNTNL) are Cytoplasmic-facing. Residues 90-110 (ISYFFDLIYLSLFGNIGIIAF) traverse the membrane as a helical segment. The Lumenal segment spans residues 111-112 (RT). The helical transmembrane segment at 113–133 (FKFWWCLLLCPIYAGYKLYGL) threads the bilayer. Residues 134–181 (KNMFMPGAQQTQADNRSKNANEGQSKSKRQMKRERRGETDSKIKYKYR) are Cytoplasmic-facing. Polar residues predominate over residues 144-157 (TQADNRSKNANEGQ). A disordered region spans residues 144–181 (TQADNRSKNANEGQSKSKRQMKRERRGETDSKIKYKYR). The segment covering 168-181 (RRGETDSKIKYKYR) has biased composition (basic and acidic residues).

This sequence belongs to the TMEM208 family. Interacts with SND1, PHO88/SND3 and the translocon complex subunit SEC61. ENV10/SND2 and PHO88/SND3 form a complex with the translocon in the endoplasmic reticulum membrane.

It is found in the endoplasmic reticulum membrane. Its function is as follows. Functions in the SND pathway, a SRP (signal recognition particle) and GET (guided entry of tail-anchored proteins) independent pathway for targeting a broad range of substrate proteins to the endoplasmic reticulum. SND functions in parallel to GET in targeting proteins with downstream hydrophobic motifs. Involved in vacuolar processing and morphology. This chain is SRP-independent targeting protein 2, found in Saccharomyces cerevisiae (strain ATCC 204508 / S288c) (Baker's yeast).